Reading from the N-terminus, the 279-residue chain is Acetylglutamate kinase (279 aa).

Substrate is bound by residues 64-65 (GG), Arg86, and Asn177.

Belongs to the acetylglutamate kinase family. ArgB subfamily.

It localises to the cytoplasm. The enzyme catalyses N-acetyl-L-glutamate + ATP = N-acetyl-L-glutamyl 5-phosphate + ADP. Its pathway is amino-acid biosynthesis; L-arginine biosynthesis; N(2)-acetyl-L-ornithine from L-glutamate: step 2/4. Functionally, catalyzes the ATP-dependent phosphorylation of N-acetyl-L-glutamate. In Campylobacter jejuni subsp. doylei (strain ATCC BAA-1458 / RM4099 / 269.97), this protein is Acetylglutamate kinase.